The chain runs to 290 residues: Nucleoid occlusion protein (290 aa).

The H-T-H motif DNA-binding region spans 153–172 (EALAQRLGKGQSTIANKLRL).

This sequence belongs to the ParB family.

The protein localises to the cytoplasm. Its subcellular location is the nucleoid. Its function is as follows. Effects nucleoid occlusion by binding relatively nonspecifically to DNA and preventing the assembly of the division machinery in the vicinity of the nucleoid, especially under conditions that disturb the cell cycle. It helps to coordinate cell division and chromosome segregation by preventing the formation of the Z ring through the nucleoid, which would cause chromosome breakage. The polypeptide is Nucleoid occlusion protein (Bacillus cereus (strain ATCC 10987 / NRS 248)).